The primary structure comprises 275 residues: Large ribosomal subunit protein uL2 (275 aa).

Residues 219–263 (EVRGAAMNPRDHPHGGGEGRAPRGMPTPKTKWGKPARGVKTRHNP) are disordered. The span at 227–239 (PRDHPHGGGEGRA) shows a compositional bias: basic and acidic residues. Over residues 249–262 (KWGKPARGVKTRHN) the composition is skewed to basic residues.

Belongs to the universal ribosomal protein uL2 family. Part of the 50S ribosomal subunit. Forms a bridge to the 30S subunit in the 70S ribosome.

Its function is as follows. One of the primary rRNA binding proteins. Required for association of the 30S and 50S subunits to form the 70S ribosome, for tRNA binding and peptide bond formation. It has been suggested to have peptidyltransferase activity; this is somewhat controversial. Makes several contacts with the 16S rRNA in the 70S ribosome. This Roseiflexus castenholzii (strain DSM 13941 / HLO8) protein is Large ribosomal subunit protein uL2.